The following is a 247-amino-acid chain: Cytochrome c oxidase subunit 2 (247 aa).

A signal peptide spans 1–11 (MLLIINNIINN). The Mitochondrial intermembrane portion of the chain corresponds to 12 to 38 (DVPTPWGVYFQDSATPNHEGIIELHDN). Residues 39–59 (IMFYLVLILCLVSWLLFSIVK) traverse the membrane as a helical segment. Residues 60–78 (DGSKNPLPHKYLVHGQTIE) lie on the Mitochondrial matrix side of the membrane. The chain crosses the membrane as a helical span at residues 79-101 (IIWTILPALVLLVIAFPSFILLY). The Mitochondrial intermembrane portion of the chain corresponds to 102-247 (LCDEVISPAM…KEFLTWLNEQ (146 aa)). Cu cation contacts are provided by H182, C217, E219, C221, H225, and M228. A Mg(2+)-binding site is contributed by E219.

It belongs to the cytochrome c oxidase subunit 2 family. As to quaternary structure, component of the cytochrome c oxidase (complex IV, CIV), a multisubunit enzyme composed of a catalytic core of 3 subunits and several supernumerary subunits. The complex exists as a monomer or a dimer and forms supercomplexes (SCs) in the inner mitochondrial membrane with ubiquinol-cytochrome c oxidoreductase (cytochrome b-c1 complex, complex III, CIII). Cu cation is required as a cofactor. Post-translationally, the signal sequence of COX2 is processed by IMP1.

It is found in the mitochondrion inner membrane. The enzyme catalyses 4 Fe(II)-[cytochrome c] + O2 + 8 H(+)(in) = 4 Fe(III)-[cytochrome c] + 2 H2O + 4 H(+)(out). Functionally, component of the cytochrome c oxidase, the last enzyme in the mitochondrial electron transport chain which drives oxidative phosphorylation. The respiratory chain contains 3 multisubunit complexes succinate dehydrogenase (complex II, CII), ubiquinol-cytochrome c oxidoreductase (cytochrome b-c1 complex, complex III, CIII) and cytochrome c oxidase (complex IV, CIV), that cooperate to transfer electrons derived from NADH and succinate to molecular oxygen, creating an electrochemical gradient over the inner membrane that drives transmembrane transport and the ATP synthase. Cytochrome c oxidase is the component of the respiratory chain that catalyzes the reduction of oxygen to water. Electrons originating from reduced cytochrome c in the intermembrane space (IMS) are transferred via the dinuclear copper A center (CU(A)) of subunit 2 and heme A of subunit 1 to the active site in subunit 1, a binuclear center (BNC) formed by heme A3 and copper B (CU(B)). The BNC reduces molecular oxygen to 2 water molecules using 4 electrons from cytochrome c in the IMS and 4 protons from the mitochondrial matrix. The chain is Cytochrome c oxidase subunit 2 (COX2) from Wickerhamomyces canadensis (Yeast).